We begin with the raw amino-acid sequence, 256 residues long: RNA polymerase sigma factor SigI1 (256 aa).

The Polymerase core binding signature appears at 67–80; it reads DEFSIALSAFNEAI. Positions 205–224 form a DNA-binding region, H-T-H motif; that stretch reads RNELKKKAKVHGRTIGNNRK.

Belongs to the sigma-70 factor family. SigI subfamily. In terms of assembly, interacts with RsgI1.

The protein localises to the cytoplasm. Negatively regulated by the anti-sigma-I factor RsgI1. Binding of the polysaccharide substrate to RsgI1 may lead to the release and activation of SigI1. Functionally, sigma factors are initiation factors that promote the attachment of RNA polymerase to specific initiation sites and are then released. This sigma factor is involved in regulation of cellulosomal genes via an external polysaccharide-sensing mechanism. SigI1 promotes transcription from sigI1 and celS promoters. In Acetivibrio thermocellus (strain ATCC 27405 / DSM 1237 / JCM 9322 / NBRC 103400 / NCIMB 10682 / NRRL B-4536 / VPI 7372) (Clostridium thermocellum), this protein is RNA polymerase sigma factor SigI1.